We begin with the raw amino-acid sequence, 296 residues long: Formamidopyrimidine-DNA glycosylase (296 aa).

Pro-2 acts as the Schiff-base intermediate with DNA in catalysis. The active-site Proton donor is the Glu-3. The active-site Proton donor; for beta-elimination activity is Lys-61. Positions 104, 123, and 169 each coordinate DNA. The FPG-type zinc-finger motif lies at 255–289 (DAYGREGEPCRRCGAIMRREKFMNRSSFYCPRCQP). Arg-279 serves as the catalytic Proton donor; for delta-elimination activity.

It belongs to the FPG family. As to quaternary structure, monomer. Zn(2+) is required as a cofactor.

The catalysed reaction is Hydrolysis of DNA containing ring-opened 7-methylguanine residues, releasing 2,6-diamino-4-hydroxy-5-(N-methyl)formamidopyrimidine.. The enzyme catalyses 2'-deoxyribonucleotide-(2'-deoxyribose 5'-phosphate)-2'-deoxyribonucleotide-DNA = a 3'-end 2'-deoxyribonucleotide-(2,3-dehydro-2,3-deoxyribose 5'-phosphate)-DNA + a 5'-end 5'-phospho-2'-deoxyribonucleoside-DNA + H(+). Functionally, involved in base excision repair of DNA damaged by oxidation or by mutagenic agents. Acts as a DNA glycosylase that recognizes and removes damaged bases. Has a preference for oxidized purines, such as 7,8-dihydro-8-oxoguanine (8-oxoG). Has AP (apurinic/apyrimidinic) lyase activity and introduces nicks in the DNA strand. Cleaves the DNA backbone by beta-delta elimination to generate a single-strand break at the site of the removed base with both 3'- and 5'-phosphates. The chain is Formamidopyrimidine-DNA glycosylase from Mycobacterium sp. (strain JLS).